The chain runs to 341 residues: tRNA N6-adenosine threonylcarbamoyltransferase (341 aa).

Fe cation is bound by residues His-111 and His-115. Residues 134-138 (LVSGG), Asp-167, Gly-180, and Asn-270 contribute to the substrate site. Asp-298 provides a ligand contact to Fe cation.

It belongs to the KAE1 / TsaD family. Fe(2+) is required as a cofactor.

It is found in the cytoplasm. It catalyses the reaction L-threonylcarbamoyladenylate + adenosine(37) in tRNA = N(6)-L-threonylcarbamoyladenosine(37) in tRNA + AMP + H(+). Required for the formation of a threonylcarbamoyl group on adenosine at position 37 (t(6)A37) in tRNAs that read codons beginning with adenine. Is involved in the transfer of the threonylcarbamoyl moiety of threonylcarbamoyl-AMP (TC-AMP) to the N6 group of A37, together with TsaE and TsaB. TsaD likely plays a direct catalytic role in this reaction. In Thiobacillus denitrificans (strain ATCC 25259 / T1), this protein is tRNA N6-adenosine threonylcarbamoyltransferase.